Consider the following 130-residue polypeptide: Fluoride-specific ion channel FluC (130 aa).

4 helical membrane-spanning segments follow: residues 3–23 (FVFL…YFVG), 39–59 (GTFS…HLAV), 67–87 (FGIF…SYGL), and 102–122 (VSYA…GWFL). Positions 77 and 80 each coordinate Na(+).

It belongs to the fluoride channel Fluc/FEX (TC 1.A.43) family.

It is found in the cell inner membrane. It catalyses the reaction fluoride(in) = fluoride(out). Na(+) is not transported, but it plays an essential structural role and its presence is essential for fluoride channel function. Functionally, fluoride-specific ion channel. Important for reducing fluoride concentration in the cell, thus reducing its toxicity. The protein is Fluoride-specific ion channel FluC of Helicobacter pylori (strain ATCC 700392 / 26695) (Campylobacter pylori).